The sequence spans 144 residues: Large ribosomal subunit protein eL27 (144 aa).

The protein belongs to the eukaryotic ribosomal protein eL27 family.

It is found in the cytoplasm. This is Large ribosomal subunit protein eL27 (RPL27) from Tetrahymena thermophila.